We begin with the raw amino-acid sequence, 179 residues long: Probable RNA 2'-phosphotransferase (179 aa).

This sequence belongs to the KptA/TPT1 family.

In terms of biological role, removes the 2'-phosphate from RNA via an intermediate in which the phosphate is ADP-ribosylated by NAD followed by a presumed transesterification to release the RNA and generate ADP-ribose 1''-2''-cyclic phosphate (APPR&gt;P). May function as an ADP-ribosylase. This Fusobacterium nucleatum subsp. nucleatum (strain ATCC 25586 / DSM 15643 / BCRC 10681 / CIP 101130 / JCM 8532 / KCTC 2640 / LMG 13131 / VPI 4355) protein is Probable RNA 2'-phosphotransferase.